The primary structure comprises 48 residues: Large ribosomal subunit protein eL40 (48 aa).

Belongs to the eukaryotic ribosomal protein eL40 family.

This Methanosphaera stadtmanae (strain ATCC 43021 / DSM 3091 / JCM 11832 / MCB-3) protein is Large ribosomal subunit protein eL40.